Reading from the N-terminus, the 982-residue chain is Protein cramped (982 aa).

5 disordered regions span residues 1–37, 71–111, 323–349, 407–456, and 822–851; these read MEEL…GGGA, QKMK…GSGK, SLPS…ASLD, NKRL…SSGD, and GTSS…QEPG. Residues 7 to 20 show a composition bias toward pro residues; it reads QPPPPPLTQPPPPS. The span at 21–30 shows a compositional bias: low complexity; sequence SSVSIEEPLP. Positions 86 to 98 are enriched in basic and acidic residues; sequence SEREPNKKEEKAA. Residues 100-111 are compositionally biased toward polar residues; it reads KTPSQLKTGSGK. An SANT domain is found at 109 to 173; sequence SGKTTWTNVE…HYYQTHHKIC (65 aa). Residues 410-425 show a composition bias toward basic and acidic residues; the sequence is LRTESGSEKRSPETKK. Phosphoserine occurs at positions 431 and 437. Over residues 822–833 the composition is skewed to low complexity; it reads GTSSAGISTSGS.

Belongs to the cramped family. Ubiquitously expressed throughout embryonic development. High expression is detected in CNS and gonads.

It localises to the nucleus. Polycomb group (Pc-G) genes are needed to maintain expression patterns of the homeotic selector genes of the Antennapedia (Antp-C) and Bithorax (Bx-C) complexes, and hence for the maintenance of segmental determination. Can act as a modifier of position effect variegation (PEV). The polypeptide is Protein cramped (crm) (Drosophila melanogaster (Fruit fly)).